Consider the following 366-residue polypeptide: tRNA/tmRNA (uracil-C(5))-methyltransferase (366 aa).

Residues glutamine 190, tyrosine 218, asparagine 223, glutamate 239, and aspartate 299 each coordinate S-adenosyl-L-methionine. The active-site Nucleophile is the cysteine 324. Catalysis depends on glutamate 358, which acts as the Proton acceptor.

It belongs to the class I-like SAM-binding methyltransferase superfamily. RNA M5U methyltransferase family. TrmA subfamily.

The enzyme catalyses uridine(54) in tRNA + S-adenosyl-L-methionine = 5-methyluridine(54) in tRNA + S-adenosyl-L-homocysteine + H(+). It carries out the reaction uridine(341) in tmRNA + S-adenosyl-L-methionine = 5-methyluridine(341) in tmRNA + S-adenosyl-L-homocysteine + H(+). Dual-specificity methyltransferase that catalyzes the formation of 5-methyluridine at position 54 (m5U54) in all tRNAs, and that of position 341 (m5U341) in tmRNA (transfer-mRNA). This chain is tRNA/tmRNA (uracil-C(5))-methyltransferase, found in Salmonella paratyphi A (strain ATCC 9150 / SARB42).